The primary structure comprises 270 residues: MNRIIRGVIQYNQKIKAGLVKQFEHVSDHPNPTAVMFTCMDSRMLPTRFTQSAVGDMFVVRNAGNMIPAAPNYGSYSEVSINTEPAALELAVKRGKIRHVVVCGHSDCKAMNTLYQLHQCPTKFDVSSPMDQWLRRNGFESMKKLNERLHIGPKTMKFESEVAPSQSFEAIIDPMEKWSAEDKLSQINVLQQIMNISTHEFLKDYLEAGNLHLHGAWFNIYDGEVFLFSKDRKRFVVIDEKTVPSLSAELERRCPLPEDKAGDVVIQNLH.

Residues Cys39, Asp41, His105, and Cys108 each coordinate Zn(2+).

This sequence belongs to the beta-class carbonic anhydrase family. Requires Zn(2+) as cofactor.

The enzyme catalyses hydrogencarbonate + H(+) = CO2 + H2O. In terms of biological role, reversible hydration of carbon dioxide. This chain is Beta carbonic anhydrase 1, found in Caenorhabditis briggsae.